We begin with the raw amino-acid sequence, 201 residues long: Cytochrome c oxidase assembly protein CtaG (201 aa).

Residues 1–12 (MTDQGENEKKQR) are Cytoplasmic-facing. Residues 13-35 (RSNATIAVACLSFFVCMIGAAYA) traverse the membrane as a helical; Signal-anchor for type II membrane protein segment. The Periplasmic portion of the chain corresponds to 36–201 (SVPLYRIFCQ…KAVGSTRNGG (166 aa)).

It belongs to the COX11/CtaG family.

It is found in the cell inner membrane. In terms of biological role, exerts its effect at some terminal stage of cytochrome c oxidase synthesis, probably by being involved in the insertion of the copper B into subunit I. This is Cytochrome c oxidase assembly protein CtaG from Brucella suis biovar 1 (strain 1330).